A 233-amino-acid chain; its full sequence is Ribonuclease 3 (233 aa).

Positions 7 to 136 constitute an RNase III domain; the sequence is KQYLLSEFNI…FIGALYLDQG (130 aa). Glu49 lines the Mg(2+) pocket. Asp53 is an active-site residue. Residues Asp122 and Glu125 each coordinate Mg(2+). Residue Glu125 is part of the active site. A DRBM domain is found at 162-232; the sequence is DFKSRLQEKL…ARAALKLLEE (71 aa).

It belongs to the ribonuclease III family. As to quaternary structure, homodimer. Requires Mg(2+) as cofactor.

Its subcellular location is the cytoplasm. The catalysed reaction is Endonucleolytic cleavage to 5'-phosphomonoester.. In terms of biological role, digests double-stranded RNA. Involved in the processing of primary rRNA transcript to yield the immediate precursors to the large and small rRNAs (23S and 16S). Processes some mRNAs, and tRNAs when they are encoded in the rRNA operon. Processes pre-crRNA and tracrRNA of type II CRISPR loci if present in the organism. The polypeptide is Ribonuclease 3 (Leuconostoc citreum (strain KM20)).